Consider the following 165-residue polypeptide: Nucleotide-binding protein MXAN_1478 (165 aa).

It belongs to the YajQ family.

In terms of biological role, nucleotide-binding protein. This Myxococcus xanthus (strain DK1622) protein is Nucleotide-binding protein MXAN_1478.